The following is a 446-amino-acid chain: Glutamine synthetase (446 aa).

Residues 15 to 103 enclose the GS beta-grasp domain; sequence ENVKFLRLQI…LICDVYYPDG (89 aa). The 337-residue stretch at 110-446 folds into the GS catalytic domain; the sequence is PRYVLKRQIE…WELDRYLATY (337 aa). Mg(2+)-binding residues include E134 and E136. E186 serves as a coordination point for ATP. Positions 191 and 198 each coordinate Mg(2+). L-glutamate is bound by residues 242 to 243 and G243; that span reads NG. H247 lines the Mg(2+) pocket. Residue S251 participates in ATP binding. L-glutamate is bound by residues R300, E306, and R318. R318 and R323 together coordinate ATP. E335 is a Mg(2+) binding site. Residue R337 participates in L-glutamate binding.

The protein belongs to the glutamine synthetase family. In terms of assembly, interacts with GCBP (TTHA1554). Mg(2+) serves as cofactor.

The protein localises to the cytoplasm. The enzyme catalyses L-glutamate + NH4(+) + ATP = L-glutamine + ADP + phosphate + H(+). Its activity is regulated as follows. Activity increases by approximately two-fold in the presence of GCBP. Functionally, catalyzes the ATP-dependent biosynthesis of glutamine from glutamate and ammonia. The sequence is that of Glutamine synthetase from Thermus thermophilus (strain ATCC 27634 / DSM 579 / HB8).